Here is a 59-residue protein sequence, read N- to C-terminus: Potassium channel toxin alpha-KTx 1.1 (59 aa).

Residues 1 to 22 (MKILSVLLLALIICSIVGWSEA) form the signal peptide. Residue Gln23 is modified to Pyrrolidone carboxylic acid. 3 disulfide bridges follow: Cys29/Cys50, Cys35/Cys55, and Cys39/Cys57. Residues 48–55 (GKCMNKKC) are interaction with Ca(2+)-activated K(+) channels.

The protein belongs to the short scorpion toxin superfamily. Potassium channel inhibitor family. Alpha-KTx 01 subfamily. Expressed by the venom gland.

The protein localises to the secreted. Functionally, this toxin inhibits numerous potassium channels: shaker (Ki=227 nM), Kv1.2/KCNA2 (nanomolar range), Kv1.3/KCNA3 (nanomolar range), Kv1.5/KCNA5 (Kd&gt;100 nM), Kv1.6/KCNA6 (Ki=22 nM), KCa1.1/KCNMA1 (IC(50)=5.9 nM). It blocks channel activity by a simple bimolecular inhibition process. It also shows a weak interaction with nicotinic acetylcholine receptors (nAChR), suggesting it may weakly inhibit it. It also exhibits pH-specific antimicrobial activities against bacteria (B.subtilis, E.coli and S.aureus) and the fungus C.albicans. In Leiurus hebraeus (Hebrew deathstalker scorpion), this protein is Potassium channel toxin alpha-KTx 1.1.